Reading from the N-terminus, the 331-residue chain is Vitamin B12 import system permease protein BtuC (331 aa).

A run of 9 helical transmembrane segments spans residues 20 to 42 (IMSVVLVLLSTIHLMVGEVFLSP), 62 to 84 (LVAAAMIGAALAVSGATLQVLLG), 91 to 113 (GVLGISGGASLAMVLVMFALPVL), 118 to 140 (IFMLAAIAGSMLFTLILVGIARA), 147 to 169 (RLLLVGVALGILSSAIVTWAFYF), 189 to 208 (ASWYQHTVTLVMLPVLVWLC), 240 to 262 (LAISVLVGCSVALGGIISFVGLV), 277 to 299 (YLLPLSAIFGAALLVFADIGARL), and 306 to 325 (LPLGVMTTSIGAPIFIWMLV).

Belongs to the binding-protein-dependent transport system permease family. FecCD subfamily. As to quaternary structure, the complex is composed of two ATP-binding proteins (BtuD), two transmembrane proteins (BtuC) and a solute-binding protein (BtuF).

It is found in the cell inner membrane. In terms of biological role, part of the ABC transporter complex BtuCDF involved in vitamin B12 import. Involved in the translocation of the substrate across the membrane. The polypeptide is Vitamin B12 import system permease protein BtuC (Vibrio parahaemolyticus serotype O3:K6 (strain RIMD 2210633)).